Reading from the N-terminus, the 89-residue chain is Small ribosomal subunit protein bS18 (89 aa).

The protein belongs to the bacterial ribosomal protein bS18 family. Part of the 30S ribosomal subunit. Forms a tight heterodimer with protein bS6.

Binds as a heterodimer with protein bS6 to the central domain of the 16S rRNA, where it helps stabilize the platform of the 30S subunit. The chain is Small ribosomal subunit protein bS18 from Treponema denticola (strain ATCC 35405 / DSM 14222 / CIP 103919 / JCM 8153 / KCTC 15104).